The chain runs to 438 residues: Putative pectate lyase 14 (438 aa).

A signal peptide spans 1–26; the sequence is MVVARTLFSISATLIIFLALFLHVNA. 3 N-linked (GlcNAc...) asparagine glycosylation sites follow: Asn40, Asn46, and Asn73. The Ca(2+) site is built by Asp236, Asp260, and Asp264. The active site involves Arg316.

Belongs to the polysaccharide lyase 1 family. The cofactor is Ca(2+).

It catalyses the reaction Eliminative cleavage of (1-&gt;4)-alpha-D-galacturonan to give oligosaccharides with 4-deoxy-alpha-D-galact-4-enuronosyl groups at their non-reducing ends.. It participates in glycan metabolism; pectin degradation; 2-dehydro-3-deoxy-D-gluconate from pectin: step 2/5. The sequence is that of Putative pectate lyase 14 from Arabidopsis thaliana (Mouse-ear cress).